A 67-amino-acid polypeptide reads, in one-letter code: Large ribosomal subunit protein bL31 (67 aa).

Zn(2+)-binding residues include cysteine 16, cysteine 18, cysteine 37, and cysteine 40.

Belongs to the bacterial ribosomal protein bL31 family. Type A subfamily. In terms of assembly, part of the 50S ribosomal subunit. Requires Zn(2+) as cofactor.

Its function is as follows. Binds the 23S rRNA. This Methylococcus capsulatus (strain ATCC 33009 / NCIMB 11132 / Bath) protein is Large ribosomal subunit protein bL31.